Reading from the N-terminus, the 277-residue chain is GPALPP motifs-containing protein 1 (277 aa).

The interval 1–240 (MARDLIGPAL…VWTDTPADRE (240 aa)) is disordered. N-acetylalanine is present on Ala-2. The GPALPP motif 1 signature appears at 7–12 (GPALPP). Ser-28 is subject to Phosphoserine. A GPALPP motif 2 motif is present at residues 32 to 37 (GPALPP). Composition is skewed to acidic residues over residues 60–69 (GNQESEEDDT) and 81–90 (DDDDDDDDEG). A GPALPP motif 3 motif is present at residues 93 to 98 (GPALPP). Ser-106 is modified (phosphoserine). The segment covering 108-117 (PRPMIGPALP) has biased composition (pro residues). A GPALPP motif 4 motif is present at residues 113 to 118 (GPALPP). Phosphoserine is present on residues Ser-138 and Ser-143. Thr-147 bears the Phosphothreonine mark. 2 positions are modified to phosphoserine: Ser-149 and Ser-150. Positions 172 to 196 (EFEKRAQRMKEKLTKGDDDSSKPIT) are enriched in basic and acidic residues.

This chain is GPALPP motifs-containing protein 1 (GPALPP1), found in Bos taurus (Bovine).